The primary structure comprises 181 residues: Translation initiation factor IF-3 (181 aa).

The protein belongs to the IF-3 family. Monomer.

The protein resides in the cytoplasm. Its function is as follows. IF-3 binds to the 30S ribosomal subunit and shifts the equilibrium between 70S ribosomes and their 50S and 30S subunits in favor of the free subunits, thus enhancing the availability of 30S subunits on which protein synthesis initiation begins. This chain is Translation initiation factor IF-3, found in Mycoplasma mycoides subsp. mycoides SC (strain CCUG 32753 / NCTC 10114 / PG1).